The following is a 205-amino-acid chain: Large ribosomal subunit protein bL25 (205 aa).

The tract at residues 184 to 205 is disordered; that stretch reads QPAGAVSEAAEGGEAAGETPAA. The span at 186-205 shows a compositional bias: low complexity; it reads AGAVSEAAEGGEAAGETPAA.

This sequence belongs to the bacterial ribosomal protein bL25 family. CTC subfamily. Part of the 50S ribosomal subunit; part of the 5S rRNA/L5/L18/L25 subcomplex. Contacts the 5S rRNA. Binds to the 5S rRNA independently of L5 and L18.

This is one of the proteins that binds to the 5S RNA in the ribosome where it forms part of the central protuberance. This is Large ribosomal subunit protein bL25 from Cupriavidus necator (strain ATCC 17699 / DSM 428 / KCTC 22496 / NCIMB 10442 / H16 / Stanier 337) (Ralstonia eutropha).